The following is a 124-amino-acid chain: Large ribosomal subunit protein bL12 (124 aa).

The protein belongs to the bacterial ribosomal protein bL12 family. Homodimer. Part of the ribosomal stalk of the 50S ribosomal subunit. Forms a multimeric L10(L12)X complex, where L10 forms an elongated spine to which 2 to 4 L12 dimers bind in a sequential fashion. Binds GTP-bound translation factors.

Functionally, forms part of the ribosomal stalk which helps the ribosome interact with GTP-bound translation factors. Is thus essential for accurate translation. This is Large ribosomal subunit protein bL12 from Bacteroides fragilis (strain ATCC 25285 / DSM 2151 / CCUG 4856 / JCM 11019 / LMG 10263 / NCTC 9343 / Onslow / VPI 2553 / EN-2).